We begin with the raw amino-acid sequence, 797 residues long: Methionine--tRNA ligase, cytoplasmic (797 aa).

The short motif at 26-36 (PYVNNVPHLGN) is the 'HIGH' region element. The short motif at 348 to 352 (KFSKS) is the 'KMSKS' region element. Lys351 contacts ATP. Residues 601–634 (DQLNKTKLSDAKKQKASSKGGGKPKPQPAADREI) form a disordered region. Residues 635-738 (TMARLDIRVG…KTANIGERVT (104 aa)) enclose the tRNA-binding domain.

It belongs to the class-I aminoacyl-tRNA synthetase family.

The protein localises to the cytoplasm. It localises to the cytosol. It catalyses the reaction tRNA(Met) + L-methionine + ATP = L-methionyl-tRNA(Met) + AMP + diphosphate. The chain is Methionine--tRNA ligase, cytoplasmic from Arabidopsis thaliana (Mouse-ear cress).